Consider the following 387-residue polypeptide: MDLFEYQAKELFAKHNVPSTPGRVTDTAEGAKAIATEIGRPVMVKAQVKIGGRGKAGGVKYAATPQDAYEHAKNILGLDIKGHIVKKLLVAEASDIAEEYYLSFLLDRANRTYLAMCSVEGGMEIEEVAATKPERLAKVPVNAVKGVDLDFARSIAEQGHLPAEVLDTAAVTIAKLWELFVAEDATLVEVNPLVRTPDHKILALDAKITLDGNADFRQPGHAEFEDRAATDPLELKAKEHDLNYVKLDGQVGIIGNGAGLVMSTLDVVAYAGEKHGGVKPANFLDIGGGASAEVMAAGLDVVLGDQQVKSVFVNVFGGITSCDAVATGIVKALGMLGDEANKPLVVRLDGNNVEEGRRILTEANHPLVTLVATMDEAADKAAELASA.

One can recognise an ATP-grasp domain in the interval 9 to 236; the sequence is KELFAKHNVP…RAATDPLELK (228 aa). Residues Lys-45, 52 to 54, Ser-94, and Glu-99 contribute to the ATP site; that span reads GRG. Mg(2+)-binding residues include Asn-191 and Asp-205. Substrate contacts are provided by residues Asn-256 and 318 to 320; that span reads GIT.

Belongs to the succinate/malate CoA ligase beta subunit family. As to quaternary structure, heterotetramer of two alpha and two beta subunits. Requires Mg(2+) as cofactor.

It catalyses the reaction succinate + ATP + CoA = succinyl-CoA + ADP + phosphate. It carries out the reaction GTP + succinate + CoA = succinyl-CoA + GDP + phosphate. The protein operates within carbohydrate metabolism; tricarboxylic acid cycle; succinate from succinyl-CoA (ligase route): step 1/1. Its function is as follows. Succinyl-CoA synthetase functions in the citric acid cycle (TCA), coupling the hydrolysis of succinyl-CoA to the synthesis of either ATP or GTP and thus represents the only step of substrate-level phosphorylation in the TCA. The beta subunit provides nucleotide specificity of the enzyme and binds the substrate succinate, while the binding sites for coenzyme A and phosphate are found in the alpha subunit. The polypeptide is Succinate--CoA ligase [ADP-forming] subunit beta (Mycobacterium tuberculosis (strain CDC 1551 / Oshkosh)).